The following is a 278-amino-acid chain: Ubiquinone biosynthesis protein COQ4, mitochondrial (278 aa).

A mitochondrion-targeting transit peptide spans M1 to F28. Zn(2+) is bound by residues H164, D165, H168, and E180.

This sequence belongs to the COQ4 family. In terms of assembly, component of a multi-subunit COQ enzyme complex, composed of at least COQ3, COQ4, COQ5, COQ6, COQ7 and COQ9. The cofactor is Zn(2+).

The protein localises to the mitochondrion inner membrane. The catalysed reaction is a 4-hydroxy-3-methoxy-5-(all-trans-polyprenyl)benzoate + H(+) = a 2-methoxy-6-(all-trans-polyprenyl)phenol + CO2. It participates in cofactor biosynthesis; ubiquinone biosynthesis. In terms of biological role, lyase that catalyzes the C1-decarboxylation of 4-hydroxy-3-methoxy-5-(all-trans-polyprenyl)benzoic acid into 2-methoxy-6-(all-trans-polyprenyl)phenol during ubiquinone biosynthesis. This Uncinocarpus reesii (strain UAMH 1704) protein is Ubiquinone biosynthesis protein COQ4, mitochondrial.